Consider the following 324-residue polypeptide: NADH-quinone oxidoreductase subunit H (324 aa).

8 consecutive transmembrane segments (helical) span residues 11–31 (ILIT…CGAF), 81–101 (VIFT…FAIV), 114–134 (IGIL…LFAG), 154–174 (VSYE…AGSF), 186–206 (LWNV…GVAV), 237–257 (FFVG…TLFF), 264–284 (ILPP…MFIL), and 304–324 (VCLP…LYNA).

It belongs to the complex I subunit 1 family. As to quaternary structure, NDH-1 is composed of 13 different subunits. Subunits NuoA, H, J, K, L, M, N constitute the membrane sector of the complex.

It localises to the cell inner membrane. The enzyme catalyses a quinone + NADH + 5 H(+)(in) = a quinol + NAD(+) + 4 H(+)(out). NDH-1 shuttles electrons from NADH, via FMN and iron-sulfur (Fe-S) centers, to quinones in the respiratory chain. The immediate electron acceptor for the enzyme in this species is believed to be ubiquinone. Couples the redox reaction to proton translocation (for every two electrons transferred, four hydrogen ions are translocated across the cytoplasmic membrane), and thus conserves the redox energy in a proton gradient. This subunit may bind ubiquinone. The polypeptide is NADH-quinone oxidoreductase subunit H (Pectobacterium carotovorum subsp. carotovorum (strain PC1)).